The sequence spans 155 residues: Ribosomal RNA large subunit methyltransferase H (155 aa).

Residues leucine 73, glycine 104, and 123-128 contribute to the S-adenosyl-L-methionine site; that span reads LSPLTL.

Belongs to the RNA methyltransferase RlmH family. Homodimer.

Its subcellular location is the cytoplasm. It carries out the reaction pseudouridine(1915) in 23S rRNA + S-adenosyl-L-methionine = N(3)-methylpseudouridine(1915) in 23S rRNA + S-adenosyl-L-homocysteine + H(+). In terms of biological role, specifically methylates the pseudouridine at position 1915 (m3Psi1915) in 23S rRNA. The polypeptide is Ribosomal RNA large subunit methyltransferase H (Pseudomonas savastanoi pv. phaseolicola (strain 1448A / Race 6) (Pseudomonas syringae pv. phaseolicola (strain 1448A / Race 6))).